The chain runs to 287 residues: Endolytic peptidoglycan transglycosylase RlpA (287 aa).

The N-terminal stretch at 1–25 (MKLKTGLNLTALLLFMISVAFPAQA) is a signal peptide. Positions 209-284 (LKGTEFYCLK…ANNKPLIVYT (76 aa)) constitute an SPOR domain.

This sequence belongs to the RlpA family.

In terms of biological role, lytic transglycosylase with a strong preference for naked glycan strands that lack stem peptides. The protein is Endolytic peptidoglycan transglycosylase RlpA of Haemophilus influenzae (strain ATCC 51907 / DSM 11121 / KW20 / Rd).